The following is a 72-amino-acid chain: uncharacterized protein (72 aa).

An N-terminal signal peptide occupies residues 1 to 19 (MKKWAVIISAVGLAFAVSG). The N-palmitoyl cysteine moiety is linked to residue Cys20. The S-diacylglycerol cysteine moiety is linked to residue Cys20.

It to E.coli YgdI.

It localises to the cell membrane. This is an uncharacterized protein from Escherichia coli O6:H1 (strain CFT073 / ATCC 700928 / UPEC).